Consider the following 330-residue polypeptide: Aspartate--ammonia ligase (330 aa).

The protein belongs to the class-II aminoacyl-tRNA synthetase family. AsnA subfamily.

It localises to the cytoplasm. It catalyses the reaction L-aspartate + NH4(+) + ATP = L-asparagine + AMP + diphosphate + H(+). It participates in amino-acid biosynthesis; L-asparagine biosynthesis; L-asparagine from L-aspartate (ammonia route): step 1/1. The sequence is that of Aspartate--ammonia ligase from Shigella boydii serotype 18 (strain CDC 3083-94 / BS512).